The chain runs to 486 residues: Transcription factor bHLH49 (486 aa).

Positions 1-17 (MDLSAKDEFSAEKRNPD) are enriched in basic and acidic residues. Disordered stretches follow at residues 1 to 30 (MDLS…GDWR) and 194 to 300 (KEST…KDGY). Composition is skewed to polar residues over residues 198–221 (VRSS…TQSS) and 243–254 (QKNSEAAQSHRS). Positions 273-293 (QSPNSPGKKSNSGKQQGKQSS) are enriched in low complexity. One can recognise a bHLH domain in the interval 309–359 (QATNSHSLAERVRREKISERMKFLQDLVPGCNKVTGKAVMLDEIINYVQSL).

As to quaternary structure, homodimer. Interacts with IBH1. As to expression, expressed constitutively in roots, stems, and flowers.

It is found in the nucleus. Functionally, transcriptional activator involved in cell elongation. Regulates the expression of a subset of genes involved in cell expansion by binding to the G-box motif. This chain is Transcription factor bHLH49 (BHLH49), found in Arabidopsis thaliana (Mouse-ear cress).